The primary structure comprises 518 residues: Motile sperm domain-containing protein 2 (518 aa).

Over methionine 1 to glutamine 496 the chain is Cytoplasmic. The CRAL-TRIO domain maps to glutamate 82–tyrosine 239. Residues proline 252–lysine 308 are disordered. Positions threonine 265–leucine 279 are enriched in basic and acidic residues. An MSP domain is found at leucine 327–valine 445. The required for FFAT motif binding and phosphorylated FFAT motif binding stretch occupies residues arginine 365–threonine 366. Residues leucine 497–serine 518 form a helical; Anchor for type IV membrane protein membrane-spanning segment.

As to quaternary structure, homooligomer. Interacts (via MSP domain) with STARD3NL (via FFAT motif), RMDN3 (via FFAT motif), OSBPL1A (via FFAT motif) and CERT1 (via FFAT motif). Interacts (via MSP domain) with STARD3 (via phosphorylated FFAT motif); this interaction depends on the critical phosphorylation of STARD3 on 'Ser-209'. Interacts with RB1CC1 (via phosphorylated FFAT motif), MIGA2 (via phosphorylated FFAT motif) and OSBPL1A (via FFAT motif). In terms of tissue distribution, highly expressed in CD14(+) monocytes, and at lower levels in neutrophils. Does not show significant expression in B-cells or T-cells.

It is found in the endoplasmic reticulum membrane. Its function is as follows. Endoplasmic reticulum-anchored protein that mediates the formation of contact sites between the endoplasmic (ER) and endosomes, mitochondria or Golgi through interaction with conventional- and phosphorylated-FFAT-containing organelle-bound proteins. In addition, forms endoplasmic reticulum (ER)-lipid droplets (LDs) contacts through a direct protein-membrane interaction and participates in LDs homeostasis. The attachment mechanism involves an amphipathic helix that has an affinity for lipid packing defects present at the surface of LDs. Promotes migration of primary monocytes and neutrophils, in response to various chemokines. This is Motile sperm domain-containing protein 2 from Homo sapiens (Human).